The chain runs to 91 residues: UPF0250 protein NMC1112 (91 aa).

This sequence belongs to the UPF0250 family.

In Neisseria meningitidis serogroup C / serotype 2a (strain ATCC 700532 / DSM 15464 / FAM18), this protein is UPF0250 protein NMC1112.